The chain runs to 171 residues: Calcium-binding protein F-like (171 aa).

4 EF-hand domains span residues 6-41 (KIFE…KMNG), 57-80 (IDMD…KAKK), 89-124 (AALA…RGYT), and 130-159 (DQYL…RRID). Ca(2+)-binding residues include D19, N21, D23, S25, and D30. 10 residues coordinate Ca(2+): D102, D104, D106, K108, E113, D137, D139, D141, C143, and E148.

The chain is Calcium-binding protein F-like (cbp12) from Dictyostelium discoideum (Social amoeba).